Here is a 295-residue protein sequence, read N- to C-terminus: ATP synthase gamma chain (295 aa).

The protein belongs to the ATPase gamma chain family. In terms of assembly, F-type ATPases have 2 components, CF(1) - the catalytic core - and CF(0) - the membrane proton channel. CF(1) has five subunits: alpha(3), beta(3), gamma(1), delta(1), epsilon(1). CF(0) has three main subunits: a, b and c.

It localises to the cell inner membrane. Functionally, produces ATP from ADP in the presence of a proton gradient across the membrane. The gamma chain is believed to be important in regulating ATPase activity and the flow of protons through the CF(0) complex. The protein is ATP synthase gamma chain of Sulfurovum sp. (strain NBC37-1).